The primary structure comprises 1211 residues: Sterol 3-beta-glucosyltransferase (1211 aa).

Positions 1 to 10 (MSQLRPRDSS) are enriched in basic and acidic residues. The segment at 1–61 (MSQLRPRDSS…DETEAEDDID (61 aa)) is disordered. In terms of domain architecture, GRAM 1 spans 196–235 (EKLKTTFDLSDDDEFVNDYPCWLLHEVFLQGHIYITSRYL). A PH domain is found at 248-347 (VTMSGALSIR…WVTDLRKHIF (100 aa)). Disordered stretches follow at residues 422–452 (LTDSDSSESDSDVSGSETNGRSTHRKSKLSR) and 500–531 (VVPNDNDSELKQDHAGDAPKDSEEPSTKPSNW). Residues 423-432 (TDSDSSESDS) show a composition bias toward acidic residues. The segment covering 507 to 525 (SELKQDHAGDAPKDSEEPS) has biased composition (basic and acidic residues). One can recognise a GRAM 2 domain in the interval 586-652 (SRFRKHFSLP…SDIENVYNLK (67 aa)). Residues Ser-770, Arg-771, Asp-773, Asn-1046, Asn-1072, Val-1073, His-1075, His-1088, Ser-1091, Gly-1092, Thr-1093, Asp-1112, and Gln-1113 each contribute to the UDP-alpha-D-glucose site.

This sequence belongs to the glycosyltransferase 28 family.

It localises to the cytoplasm. The protein resides in the preautophagosomal structure membrane. It carries out the reaction a sterol + UDP-alpha-D-glucose = a sterol 3-beta-D-glucoside + UDP + H(+). The catalysed reaction is ergosterol + UDP-alpha-D-glucose = ergosteryl 3-beta-D-glucoside + UDP + H(+). Sterol glycosyltransferase responsible for the glycosylation of ergosterol to form ergosterol-glucoside. Shows also activity in vitro on other sterols such as cholesterol, beta-sitosterol, stigmasterol and tomatidine. Probable sterol 3-beta-glucosyltransferase that mediates autophagic degradation of peroxisomes (pexophagy). The sequence is that of Sterol 3-beta-glucosyltransferase from Komagataella phaffii (strain GS115 / ATCC 20864) (Yeast).